The chain runs to 285 residues: Malectin (285 aa).

A signal peptide spans 1–26 (MRRVTLHCAARLVIAALWLLVEVCRA). Over 27 to 262 (ESGAQSLAER…TPNPYATDNS (236 aa)) the chain is Lumenal. Positions 71, 93, 120, 121, and 190 each coordinate a carbohydrate. The disordered stretch occupies residues 209–258 (KLQPHPGLEKREEEEEEEEEGEGPEGEKKSASTSPKNPVRSGPRTPNPYA). Over residues 220-232 (EEEEEEEEEGEGP) the composition is skewed to acidic residues. N-linked (GlcNAc...) asparagine glycosylation occurs at asparagine 261. A helical membrane pass occupies residues 263-283 (SLMFPILVAFGVFIPTLFCLC). Over 284-285 (RL) the chain is Cytoplasmic.

This sequence belongs to the malectin family.

It localises to the endoplasmic reticulum membrane. Functionally, carbohydrate-binding protein with a strong ligand preference for Glc2-N-glycan. May play a role in the early steps of protein N-glycosylation. The protein is Malectin of Danio rerio (Zebrafish).